A 217-amino-acid chain; its full sequence is Small ribosomal subunit protein uS3 (217 aa).

The KH type-2 domain maps to 38 to 106; it reads IRKFIDNELK…KVHINVIEIK (69 aa).

Belongs to the universal ribosomal protein uS3 family. In terms of assembly, part of the 30S ribosomal subunit. Forms a tight complex with proteins S10 and S14.

Functionally, binds the lower part of the 30S subunit head. Binds mRNA in the 70S ribosome, positioning it for translation. The sequence is that of Small ribosomal subunit protein uS3 from Staphylococcus haemolyticus (strain JCSC1435).